The sequence spans 473 residues: Kynurenine 3-monooxygenase (473 aa).

Belongs to the aromatic-ring hydroxylase family. KMO subfamily. Requires FAD as cofactor.

The protein localises to the mitochondrion outer membrane. The catalysed reaction is L-kynurenine + NADPH + O2 + H(+) = 3-hydroxy-L-kynurenine + NADP(+) + H2O. The protein operates within cofactor biosynthesis; NAD(+) biosynthesis; quinolinate from L-kynurenine: step 1/3. Functionally, catalyzes the hydroxylation of L-kynurenine (L-Kyn) to form 3-hydroxy-L-kynurenine (L-3OHKyn). Required for synthesis of quinolinic acid. The sequence is that of Kynurenine 3-monooxygenase from Debaryomyces hansenii (strain ATCC 36239 / CBS 767 / BCRC 21394 / JCM 1990 / NBRC 0083 / IGC 2968) (Yeast).